The sequence spans 320 residues: Mitochondrial thiamine pyrophosphate carrier (320 aa).

Solcar repeat units follow at residues 13 to 106, 116 to 202, and 214 to 309; these read NTKL…LTEL, REFS…LKHL, and NENL…FCNV. The chain crosses the membrane as a helical span at residues 19 to 39; it reads AVAGSVSGLVTRALISPFDVI. Ser51 is modified (phosphoserine). 4 helical membrane passes run 87–107, 122–142, 173–193, and 220–240; these read ILSI…TELV, FVCG…VDVL, VFYK…GLQF, and LLCG…LDLF. Positions 241-246 match the Substrate recognition motif; that stretch reads KKRLQV. A helical transmembrane segment spans residues 293–313; that stretch reads ALSTGFMFFWYEFFCNVFHCM.

This sequence belongs to the mitochondrial carrier (TC 2.A.29) family.

The protein resides in the mitochondrion membrane. It catalyses the reaction thiamine phosphate(out) + thiamine diphosphate(in) = thiamine phosphate(in) + thiamine diphosphate(out). Its function is as follows. Mitochondrial transporter mediating uptake of thiamine diphosphate into mitochondria. It is not clear if the antiporter activity is affected by the membrane potential or by the proton electrochemical gradient. The protein is Mitochondrial thiamine pyrophosphate carrier (SLC25A19) of Macaca fascicularis (Crab-eating macaque).